A 294-amino-acid chain; its full sequence is 4-hydroxy-tetrahydrodipicolinate synthase (294 aa).

Residue threonine 44 coordinates pyruvate. Tyrosine 132 acts as the Proton donor/acceptor in catalysis. The active-site Schiff-base intermediate with substrate is the lysine 161. Isoleucine 203 provides a ligand contact to pyruvate.

The protein belongs to the DapA family. Homotetramer; dimer of dimers.

It is found in the cytoplasm. It carries out the reaction L-aspartate 4-semialdehyde + pyruvate = (2S,4S)-4-hydroxy-2,3,4,5-tetrahydrodipicolinate + H2O + H(+). The protein operates within amino-acid biosynthesis; L-lysine biosynthesis via DAP pathway; (S)-tetrahydrodipicolinate from L-aspartate: step 3/4. In terms of biological role, catalyzes the condensation of (S)-aspartate-beta-semialdehyde [(S)-ASA] and pyruvate to 4-hydroxy-tetrahydrodipicolinate (HTPA). The sequence is that of 4-hydroxy-tetrahydrodipicolinate synthase from Aquifex aeolicus (strain VF5).